The primary structure comprises 128 residues: Ribonuclease P protein component 4 (128 aa).

Zn(2+) contacts are provided by cysteine 67, cysteine 70, cysteine 96, and cysteine 99.

It belongs to the eukaryotic/archaeal RNase P protein component 4 family. Consists of a catalytic RNA component and at least 4-5 protein subunits. Requires Zn(2+) as cofactor.

Its subcellular location is the cytoplasm. It carries out the reaction Endonucleolytic cleavage of RNA, removing 5'-extranucleotides from tRNA precursor.. Its function is as follows. Part of ribonuclease P, a protein complex that generates mature tRNA molecules by cleaving their 5'-ends. This Methanopyrus kandleri (strain AV19 / DSM 6324 / JCM 9639 / NBRC 100938) protein is Ribonuclease P protein component 4.